The sequence spans 359 residues: UDP-N-acetylglucosamine--N-acetylmuramyl-(pentapeptide) pyrophosphoryl-undecaprenol N-acetylglucosamine transferase (359 aa).

Residues 14–16 (TGG), Asn-126, Arg-166, Ser-194, Ile-248, and Gln-293 contribute to the UDP-N-acetyl-alpha-D-glucosamine site.

This sequence belongs to the glycosyltransferase 28 family. MurG subfamily.

It localises to the cell inner membrane. It catalyses the reaction di-trans,octa-cis-undecaprenyl diphospho-N-acetyl-alpha-D-muramoyl-L-alanyl-D-glutamyl-meso-2,6-diaminopimeloyl-D-alanyl-D-alanine + UDP-N-acetyl-alpha-D-glucosamine = di-trans,octa-cis-undecaprenyl diphospho-[N-acetyl-alpha-D-glucosaminyl-(1-&gt;4)]-N-acetyl-alpha-D-muramoyl-L-alanyl-D-glutamyl-meso-2,6-diaminopimeloyl-D-alanyl-D-alanine + UDP + H(+). The protein operates within cell wall biogenesis; peptidoglycan biosynthesis. In terms of biological role, cell wall formation. Catalyzes the transfer of a GlcNAc subunit on undecaprenyl-pyrophosphoryl-MurNAc-pentapeptide (lipid intermediate I) to form undecaprenyl-pyrophosphoryl-MurNAc-(pentapeptide)GlcNAc (lipid intermediate II). The sequence is that of UDP-N-acetylglucosamine--N-acetylmuramyl-(pentapeptide) pyrophosphoryl-undecaprenol N-acetylglucosamine transferase from Verminephrobacter eiseniae (strain EF01-2).